A 496-amino-acid chain; its full sequence is Catalase isozyme 3 (496 aa).

A disordered region spans residues 1 to 25 (MTMDPTKFRPSSSHDTTVTTTNAGA). The segment covering 9-23 (RPSSSHDTTVTTTNA) has biased composition (polar residues). Active-site residues include histidine 67 and asparagine 140. Tyrosine 351 is a binding site for heme. Positions 402–422 (PLRQAAPPTPLPPRPVAGRRE) are disordered.

Belongs to the catalase family. As to quaternary structure, homotetramer. Heme serves as cofactor. Leaf mesophyll cells, pericarp, seedling roots and the coleoptile.

It is found in the mitochondrion. It carries out the reaction 2 H2O2 = O2 + 2 H2O. Its function is as follows. Occurs in almost all aerobically respiring organisms and serves to protect cells from the toxic effects of hydrogen peroxide. Its levels are highest in the light period and are lowest in the dark period, hence it may be important for scavenging hydrogen peroxide at night, rather than during the day. The sequence is that of Catalase isozyme 3 (CAT3) from Zea mays (Maize).